We begin with the raw amino-acid sequence, 160 residues long: Eosinophil cationic protein (160 aa).

A signal peptide spans 1–27 (MVPKLFTSQICLLLLLGLMGVEGSLHA). The interval 28 to 72 (RPPQFTRAQWFAIQHISLNPPRCTIAMRVINNYRWRCKNQNTFLR) is required for nearly all of the bactericidal activities; partially involved in LPS-binding. His-42 (proton acceptor) is an active-site residue. Cystine bridges form between Cys-50/Cys-110, Cys-64/Cys-123, Cys-82/Cys-138, and Cys-89/Cys-98. Tyr-60 carries the 3'-nitrotyrosine modification. 65–69 (KNQNT) is a binding site for substrate. N-linked (GlcNAc...) asparagine glycosylation is found at Asn-84, Asn-92, and Asn-119. His-155 (proton donor) is an active-site residue.

It belongs to the pancreatic ribonuclease family. In terms of assembly, interacts with bacterial lipopolysaccharide (LPS) and lipoteichoic acid (LTA). In vitro interacts with phospholipid bilayers.

The protein localises to the secreted. Its function is as follows. Cytotoxin and helminthotoxin with low-efficiency ribonuclease activity. Possesses a wide variety of biological activities. Exhibits antibacterial activity. The protein is Eosinophil cationic protein (RNASE3) of Gorilla gorilla gorilla (Western lowland gorilla).